The chain runs to 632 residues: RNA-binding post-transcriptional regulator csx1 (632 aa).

2 positions are modified to phosphoserine; by MAPK sty1: Ser42 and Ser54. Ser67 and Ser69 each carry phosphoserine. 2 RRM domains span residues 85–167 and 182–261; these read DTLW…WATG and FSIF…VASP. Ser291 is subject to Phosphoserine; by MAPK sty1. Positions 297-369 constitute an RRM 3 domain; that stretch reads TTVFVGGLAS…SHIRLAWGHN (73 aa). Position 455 is a phosphoserine; by MAPK sty1 (Ser455). Residues 456–476 form a disordered region; it reads PPPLSRSASISPTLSGSGSGL. The span at 466 to 476 shows a compositional bias: low complexity; that stretch reads SPTLSGSGSGL.

As to quaternary structure, interacts with cip1 and cip2.

The protein localises to the cytoplasm. Regulates global gene expression after oxidative stress. Interacts and stabilizes atf1 and pcr1 mRNAs after oxidative stress, thus controlling their turnover. This chain is RNA-binding post-transcriptional regulator csx1 (csx1), found in Schizosaccharomyces pombe (strain 972 / ATCC 24843) (Fission yeast).